The primary structure comprises 353 residues: Photosystem II protein D1 (353 aa).

The residue at position 2 (T2) is an N-acetylthreonine. At T2 the chain carries Phosphothreonine. 3 consecutive transmembrane segments (helical) span residues 29–46 (YIGW…TATS), 118–133 (HFLL…EWEL), and 142–156 (WIAV…AATA). Residue H118 participates in chlorophyll a binding. Y126 serves as a coordination point for pheophytin a. Residues D170 and E189 each coordinate [CaMn4O5] cluster. Residues 197–218 (FHMLGVAGVFGGSLFSAMHGSL) traverse the membrane as a helical segment. Residue H198 coordinates chlorophyll a. Residues H215 and 264–265 (SF) each bind a quinone. H215 contributes to the Fe cation binding site. H272 is a binding site for Fe cation. Residues 274 to 288 (FLAAWPVVGIWFTAL) traverse the membrane as a helical segment. The [CaMn4O5] cluster site is built by H332, E333, D342, and A344. Residues 345–353 (ALEVPYLNG) constitute a propeptide that is removed on maturation.

It belongs to the reaction center PufL/M/PsbA/D family. PSII is composed of 1 copy each of membrane proteins PsbA, PsbB, PsbC, PsbD, PsbE, PsbF, PsbH, PsbI, PsbJ, PsbK, PsbL, PsbM, PsbT, PsbX, PsbY, PsbZ, Psb30/Ycf12, at least 3 peripheral proteins of the oxygen-evolving complex and a large number of cofactors. It forms dimeric complexes. It depends on The D1/D2 heterodimer binds P680, chlorophylls that are the primary electron donor of PSII, and subsequent electron acceptors. It shares a non-heme iron and each subunit binds pheophytin, quinone, additional chlorophylls, carotenoids and lipids. D1 provides most of the ligands for the Mn4-Ca-O5 cluster of the oxygen-evolving complex (OEC). There is also a Cl(-1) ion associated with D1 and D2, which is required for oxygen evolution. The PSII complex binds additional chlorophylls, carotenoids and specific lipids. as a cofactor. Phosphorylated in both bundle sheath and mesophyll cells, phosphorylation increases when cells are grown under high rather than low light regimes (70 vs 900 umol photons/m-2/s). Post-translationally, PSII is subject to light-induced damage, in particular to D1. Damaged protein is degraded by Deg1 and FtsH proteases and replaced. In maize mesophyll cells D1 degradation is less extensive in grana (stacked) vs stroma (unstacked) lamellae, in part due to exclusion of FtsH from the grana. D1 degradation is faster in bundle sheath cells. In terms of processing, tyr-161 forms a radical intermediate that is referred to as redox-active TyrZ, YZ or Y-Z. C-terminally processed by CTPA; processing is essential to allow assembly of the oxygen-evolving complex and thus photosynthetic growth.

Its subcellular location is the plastid. It localises to the chloroplast thylakoid membrane. It catalyses the reaction 2 a plastoquinone + 4 hnu + 2 H2O = 2 a plastoquinol + O2. In terms of biological role, photosystem II (PSII) is a light-driven water:plastoquinone oxidoreductase that uses light energy to abstract electrons from H(2)O, generating O(2) and a proton gradient subsequently used for ATP formation. It consists of a core antenna complex that captures photons, and an electron transfer chain that converts photonic excitation into a charge separation. The D1/D2 (PsbA/PsbD) reaction center heterodimer binds P680, the primary electron donor of PSII as well as several subsequent electron acceptors. The polypeptide is Photosystem II protein D1 (Zea mays (Maize)).